Consider the following 161-residue polypeptide: NNGGRAYIVLSIPNLAHYQLITGFKETLKNKGHPELMDKVGHDFSGNDNIDQVEKAYKKAGVTGHVWQSDGITNCIASFIRGLDRAKKAVANRDSSNGFINKVYYWTVDKYATTREALDAGVDGIMTNYPDVVANVLSESAYKAKFRIATYDDNPWETFKN.

This sequence belongs to the arthropod phospholipase D family. Class II subfamily. Mg(2+) is required as a cofactor. In terms of processing, contains 2 disulfide bonds. In terms of tissue distribution, expressed by the venom gland.

The protein localises to the secreted. It catalyses the reaction an N-(acyl)-sphingosylphosphocholine = an N-(acyl)-sphingosyl-1,3-cyclic phosphate + choline. It carries out the reaction an N-(acyl)-sphingosylphosphoethanolamine = an N-(acyl)-sphingosyl-1,3-cyclic phosphate + ethanolamine. The enzyme catalyses a 1-acyl-sn-glycero-3-phosphocholine = a 1-acyl-sn-glycero-2,3-cyclic phosphate + choline. The catalysed reaction is a 1-acyl-sn-glycero-3-phosphoethanolamine = a 1-acyl-sn-glycero-2,3-cyclic phosphate + ethanolamine. Its function is as follows. Dermonecrotic toxins cleave the phosphodiester linkage between the phosphate and headgroup of certain phospholipids (sphingolipid and lysolipid substrates), forming an alcohol (often choline) and a cyclic phosphate. This toxin acts on sphingomyelin (SM). It may also act on ceramide phosphoethanolamine (CPE), lysophosphatidylcholine (LPC) and lysophosphatidylethanolamine (LPE), but not on lysophosphatidylserine (LPS), and lysophosphatidylglycerol (LPG). It acts by transphosphatidylation, releasing exclusively cyclic phosphate products as second products. Induces dermonecrosis, hemolysis, increased vascular permeability, edema, inflammatory response, and platelet aggregation. In Loxosceles arizonica (Arizona brown spider), this protein is Dermonecrotic toxin LarSicTox-alphaI-1.